Reading from the N-terminus, the 154-residue chain is Superoxide dismutase [Cu-Zn] (154 aa).

Residues His-47, His-49, and His-64 each contribute to the Cu cation site. Cys-58 and Cys-147 are oxidised to a cystine. Zn(2+) contacts are provided by His-64, His-72, His-81, and Asp-84. His-121 provides a ligand contact to Cu cation. Over residues 125 to 137 (DDLGRSEHPESKK) the composition is skewed to basic and acidic residues. Positions 125–144 (DDLGRSEHPESKKTGNAGAR) are disordered. Arg-144 lines the substrate pocket.

The protein belongs to the Cu-Zn superoxide dismutase family. Homodimer. Cu cation serves as cofactor. Requires Zn(2+) as cofactor.

The protein localises to the cytoplasm. The catalysed reaction is 2 superoxide + 2 H(+) = H2O2 + O2. Destroys radicals which are normally produced within the cells and which are toxic to biological systems. In Aspergillus oryzae (strain ATCC 42149 / RIB 40) (Yellow koji mold), this protein is Superoxide dismutase [Cu-Zn] (sodC).